The sequence spans 359 residues: Methionine import ATP-binding protein MetN (359 aa).

The segment at 1-21 (MSTPASTPAPDGSHQRDHHPG) is disordered. Residues 24–264 (VEFRGVTKVF…PQTTVAQRFV (241 aa)) enclose the ABC transporter domain. 61 to 68 (GYSGAGKS) serves as a coordination point for ATP.

This sequence belongs to the ABC transporter superfamily. Methionine importer (TC 3.A.1.24) family. In terms of assembly, the complex is composed of two ATP-binding proteins (MetN), two transmembrane proteins (MetI) and a solute-binding protein (MetQ).

The protein localises to the cell membrane. It carries out the reaction L-methionine(out) + ATP + H2O = L-methionine(in) + ADP + phosphate + H(+). The catalysed reaction is D-methionine(out) + ATP + H2O = D-methionine(in) + ADP + phosphate + H(+). Part of the ABC transporter complex MetNIQ involved in methionine import. Responsible for energy coupling to the transport system. This chain is Methionine import ATP-binding protein MetN, found in Corynebacterium efficiens (strain DSM 44549 / YS-314 / AJ 12310 / JCM 11189 / NBRC 100395).